The sequence spans 66 residues: Large ribosomal subunit protein bL33c (66 aa).

Belongs to the bacterial ribosomal protein bL33 family.

Its subcellular location is the plastid. It localises to the chloroplast. The polypeptide is Large ribosomal subunit protein bL33c (Dioscorea elephantipes (Elephant's foot yam)).